The primary structure comprises 717 residues: Acetone carboxylase beta subunit (717 aa).

In terms of assembly, heterohexamer of two alpha, two beta and two gamma subunits. It depends on Fe cation as a cofactor. The cofactor is Mg(2+). Requires Zn(2+) as cofactor. In terms of processing, the N-terminus is blocked.

The catalysed reaction is acetone + hydrogencarbonate + 2 ATP + 3 H2O = acetoacetate + 2 AMP + 4 phosphate + 4 H(+). Functionally, catalyzes the carboxylation of acetone to form acetoacetate. Has a reduced activity on butanone, and no activity on 2-pentatone, 3-pentatone, 2-hexanone, chloroacetone, pyruvate, phosphoenolpyruvate, acetaldehyde, propionaldehyde and propylene oxide. The protein is Acetone carboxylase beta subunit of Xanthobacter autotrophicus (strain ATCC BAA-1158 / Py2).